The sequence spans 482 residues: MAEDVSSGEQTEDQAGQPLLNGEIIASNGDKCQFRTYKRRWFVLGVICLLSCTNAMLWISFAPVADVTASFFKCSLDVVNYLSLVYLIIAIPVGFGASWLIDTLGLKYAIVFSSWLNMIGSIIRCGAIVPYLNPSGSYTGIYYLFTGQSLCAIAQPLVLFVPAKLASVWFPEHQRATANMIASMSNPLGVLLANIISPSVVTKEEYIAHMLGIYTVPAIAACILATAGIRAKSPPTPPSASAFNSASEPFIAGIRQLLTNRAYVILMLCFGAGIGIFTAISSFLEQILCFRGYSNLFAGVCGALFIFFGFIGAFVCGLYVDRTKKFKEVVKTCFALTALTSIAFALVINFREQTVLVACVCSLLGLFGFAISPVGMELAVECSYPVGEGSSTGLAFISGQIQGIIYMILFQKLTRPFATSGPSPCGMNQTEIYDWSTSMLVMAALCSFGSCIFIIFFHTKYKRLLAEVNFNGLKEELNTHET.

12 helical membrane passes run 41–61 (WFVLGVICLLSCTNAMLWISF), 81–101 (YLSLVYLIIAIPVGFGASWLI), 109–129 (AIVFSSWLNMIGSIIRCGAIV), 150–170 (LCAIAQPLVLFVPAKLASVWF), 181–201 (IASMSNPLGVLLANIISPSVV), 206–226 (YIAHMLGIYTVPAIAACILAT), 264–284 (VILMLCFGAGIGIFTAISSFL), 296–316 (LFAGVCGALFIFFGFIGAFVC), 330–350 (VKTCFALTALTSIAFALVINF), 355–375 (VLVACVCSLLGLFGFAISPVG), 390–410 (SSTGLAFISGQIQGIIYMILF), and 437–457 (TSMLVMAALCSFGSCIFIIFF).

It belongs to the major facilitator superfamily.

Its subcellular location is the membrane. This is Solute carrier family 49 member A3 (slc49a3) from Xenopus tropicalis (Western clawed frog).